The chain runs to 321 residues: Lipoyl synthase (321 aa).

Residues cysteine 68, cysteine 73, cysteine 79, cysteine 94, cysteine 98, cysteine 101, and serine 308 each coordinate [4Fe-4S] cluster. The Radical SAM core domain maps to 80–297 (FNHGTATFMI…KEIALELGFT (218 aa)).

The protein belongs to the radical SAM superfamily. Lipoyl synthase family. [4Fe-4S] cluster is required as a cofactor.

Its subcellular location is the cytoplasm. It catalyses the reaction [[Fe-S] cluster scaffold protein carrying a second [4Fe-4S](2+) cluster] + N(6)-octanoyl-L-lysyl-[protein] + 2 oxidized [2Fe-2S]-[ferredoxin] + 2 S-adenosyl-L-methionine + 4 H(+) = [[Fe-S] cluster scaffold protein] + N(6)-[(R)-dihydrolipoyl]-L-lysyl-[protein] + 4 Fe(3+) + 2 hydrogen sulfide + 2 5'-deoxyadenosine + 2 L-methionine + 2 reduced [2Fe-2S]-[ferredoxin]. It functions in the pathway protein modification; protein lipoylation via endogenous pathway; protein N(6)-(lipoyl)lysine from octanoyl-[acyl-carrier-protein]: step 2/2. Catalyzes the radical-mediated insertion of two sulfur atoms into the C-6 and C-8 positions of the octanoyl moiety bound to the lipoyl domains of lipoate-dependent enzymes, thereby converting the octanoylated domains into lipoylated derivatives. The polypeptide is Lipoyl synthase (Vibrio atlanticus (strain LGP32) (Vibrio splendidus (strain Mel32))).